Here is a 401-residue protein sequence, read N- to C-terminus: ATP phosphoribosyltransferase regulatory subunit (401 aa).

It belongs to the class-II aminoacyl-tRNA synthetase family. HisZ subfamily. Heteromultimer composed of HisG and HisZ subunits.

It localises to the cytoplasm. It functions in the pathway amino-acid biosynthesis; L-histidine biosynthesis; L-histidine from 5-phospho-alpha-D-ribose 1-diphosphate: step 1/9. Functionally, required for the first step of histidine biosynthesis. May allow the feedback regulation of ATP phosphoribosyltransferase activity by histidine. In Desulforamulus reducens (strain ATCC BAA-1160 / DSM 100696 / MI-1) (Desulfotomaculum reducens), this protein is ATP phosphoribosyltransferase regulatory subunit.